A 100-amino-acid chain; its full sequence is Aspartyl/glutamyl-tRNA(Asn/Gln) amidotransferase subunit C (100 aa).

It belongs to the GatC family. As to quaternary structure, heterotrimer of A, B and C subunits.

The enzyme catalyses L-glutamyl-tRNA(Gln) + L-glutamine + ATP + H2O = L-glutaminyl-tRNA(Gln) + L-glutamate + ADP + phosphate + H(+). It catalyses the reaction L-aspartyl-tRNA(Asn) + L-glutamine + ATP + H2O = L-asparaginyl-tRNA(Asn) + L-glutamate + ADP + phosphate + 2 H(+). In terms of biological role, allows the formation of correctly charged Asn-tRNA(Asn) or Gln-tRNA(Gln) through the transamidation of misacylated Asp-tRNA(Asn) or Glu-tRNA(Gln) in organisms which lack either or both of asparaginyl-tRNA or glutaminyl-tRNA synthetases. The reaction takes place in the presence of glutamine and ATP through an activated phospho-Asp-tRNA(Asn) or phospho-Glu-tRNA(Gln). The polypeptide is Aspartyl/glutamyl-tRNA(Asn/Gln) amidotransferase subunit C (Streptococcus pneumoniae serotype 19F (strain G54)).